The sequence spans 313 residues: Acetyl-coenzyme A carboxylase carboxyl transferase subunit alpha (313 aa).

Positions 30-291 (DLDREISDLE…KMALLQELAF (262 aa)) constitute a CoA carboxyltransferase C-terminal domain.

This sequence belongs to the AccA family. In terms of assembly, acetyl-CoA carboxylase is a heterohexamer composed of biotin carboxyl carrier protein (AccB), biotin carboxylase (AccC) and two subunits each of ACCase subunit alpha (AccA) and ACCase subunit beta (AccD).

It localises to the cytoplasm. It carries out the reaction N(6)-carboxybiotinyl-L-lysyl-[protein] + acetyl-CoA = N(6)-biotinyl-L-lysyl-[protein] + malonyl-CoA. It functions in the pathway lipid metabolism; malonyl-CoA biosynthesis; malonyl-CoA from acetyl-CoA: step 1/1. Functionally, component of the acetyl coenzyme A carboxylase (ACC) complex. First, biotin carboxylase catalyzes the carboxylation of biotin on its carrier protein (BCCP) and then the CO(2) group is transferred by the carboxyltransferase to acetyl-CoA to form malonyl-CoA. The polypeptide is Acetyl-coenzyme A carboxylase carboxyl transferase subunit alpha (Zymomonas mobilis subsp. mobilis (strain ATCC 31821 / ZM4 / CP4)).